Reading from the N-terminus, the 291-residue chain is ATP synthase gamma chain (291 aa).

This sequence belongs to the ATPase gamma chain family. As to quaternary structure, F-type ATPases have 2 components, CF(1) - the catalytic core - and CF(0) - the membrane proton channel. CF(1) has five subunits: alpha(3), beta(3), gamma(1), delta(1), epsilon(1). CF(0) has three main subunits: a, b and c.

It localises to the cell inner membrane. Its function is as follows. Produces ATP from ADP in the presence of a proton gradient across the membrane. The gamma chain is believed to be important in regulating ATPase activity and the flow of protons through the CF(0) complex. This is ATP synthase gamma chain from Rhodopseudomonas palustris (strain BisB5).